Here is a 372-residue protein sequence, read N- to C-terminus: Stress-activated protein kinase JNK (372 aa).

The region spanning 24-320 is the Protein kinase domain; that stretch reads YINLRPIGSG…VDEALKHEYI (297 aa). Residues 31–36 and K53 contribute to the ATP site; that span reads GSGAQG. D149 serves as the catalytic Proton acceptor. T181 carries the post-translational modification Phosphothreonine. The TXY motif lies at 181–183; sequence TPY. At Y183 the chain carries Phosphotyrosine.

It belongs to the protein kinase superfamily. CMGC Ser/Thr protein kinase family. MAP kinase subfamily. As to quaternary structure, interacts with MKP-4 (via tyrosine-protein phosphatase domain); the interaction dephosphorylates bsk. It depends on Mg(2+) as a cofactor. Post-translationally, dually phosphorylated on Thr-181 and Tyr-183, which activates the enzyme. During gastrulation, expression is seen in cells undergoing morphogenetic movements. By stage 9 of embryonic development, expression is ubiquitous. At stages 12-14, expression occurs in epidermis and central nervous system. At stage 15, expression is restricted to ventral nerve cord, brain and some peripheral neurons. In larvae, expression is seen in all imaginal disks, with highest levels in wing and eye disks, and in the CNS. Adults express the protein in fat body and hemocytes.

Its subcellular location is the nucleus. The protein resides in the cytoplasm. It carries out the reaction L-seryl-[protein] + ATP = O-phospho-L-seryl-[protein] + ADP + H(+). The catalysed reaction is L-threonyl-[protein] + ATP = O-phospho-L-threonyl-[protein] + ADP + H(+). Its activity is regulated as follows. Activated by threonine and tyrosine phosphorylation by the dual specificity kinase, hep. Inhibited by dual specificity phosphatase, puckered. Functionally, mitogen-activated protein kinase and key component of the c-Jun N-terminal kinase (JNK) pathway which phosphorylate and activate transcription factors involved in a wide range of biological processes including response to various stresses, cellular proliferation, differentiation and migration, and regulation of cell shape. Responds to activation by environmental stress by phosphorylating a number of transcription factors, primarily components of AP-1 such as Jra and also the transcriptional repressor aop, and thus regulates transcriptional activity. Component of the immune response activated by bacterial infection, and is involved in wound healing and in dorsal closure, a morphogenetic movement during embryogenesis. Functions in the systematic response to wounding acting downstream of the Hayan-phenoloxidase PPO1 cascade. During epidermal wound healing involved in cellular polarization by inducing the translocation of sktl and mys/integrin beta to the trailing edge. Exhibits cytoprotective activity in neuronal cells in response to wounding to the integument. Controls the expression of a phosphatase, puckered, at the edges of wounded epidermal tissue and in the dorsal epithelium during dorsal closure. Regulates the activity of SREBP in neurons and thereby the accumulation of lipids in glia. Plays a role in positively regulating the expression of DIP2 independently of AP-1, thereby ensuring proper axon guidance in mushroom bodies. In enterocytes and differentiating progenitors of the gut that are experiencing inorganic phosphate (Pi) deficiency, activated by Cka to induce nearby progenitor cells to proliferate and form new absorptive cells, probably helping the organism to cope with the nutrient deficiency by maximizing absorption of dietary Pi. The sequence is that of Stress-activated protein kinase JNK from Drosophila melanogaster (Fruit fly).